The chain runs to 436 residues: UPF0597 protein YhaM (436 aa).

This sequence belongs to the UPF0597 family.

In Salmonella heidelberg (strain SL476), this protein is UPF0597 protein YhaM.